The sequence spans 1079 residues: Psi-producing oxygenase A (1079 aa).

The interval 105-446 is linoleate 8R-lipoxygenase; sequence TNTFLTTLWN…DGSYDDNDLV (342 aa). H202 provides a ligand contact to heme b. The active site involves Y374. Residue H377 participates in heme b binding. Residues 654–1079 form a 9,12-octadecadienoate 8-hydroperoxide 8R-isomerase region; it reads QFINSHSACM…WDGDLPEVKE (426 aa).

The protein belongs to the peroxidase family. Homotetramer. The cofactor is heme b.

The catalysed reaction is (9Z,12Z)-octadecadienoate + O2 = (8R,9Z,12Z)-8-hydroperoxyoctadeca-9,12-dienoate. It carries out the reaction (8R,9Z,12Z)-8-hydroperoxyoctadeca-9,12-dienoate = (5S,8R,9Z,12Z)-5,8-dihydroxyoctadeca-9,12-dienoate. Its function is as follows. Bifunctional heme-containing enzyme that oxidizes linoleic acid to (8R,9Z,12Z)-8-hydroperoxyoctadeca-9,12-dienoate (within the N-terminal heme peroxidase domain), which is subsequently isomerized to (5S,8R,9Z,12Z)-5,8-dihydroxyoctadeca-9,12-dienoate (within the C-terminal P450 heme thiolate domain). Oxidized unsaturated fatty acids, so-called oxylipins, derived from endogenous fatty acids, influence the development of the asexual conidiophores and sexual cleistothecia and regulate the secondary metabolism. These substances were collectively named psi factors and are primarily a mixture of hydroxylated oleic, linoleic and alpha-linolenic acids. They are termed psi-beta, psi-alpha, and psi-gamma, respectively. Oxylipins may also serve as activators of mammalian immune responses contributing to enhanced resistance to opportunistic fungi and as factors that modulate fungal development contributing to resistance to host defenses. The protein is Psi-producing oxygenase A (ppoA) of Aspergillus fumigatus (strain ATCC MYA-4609 / CBS 101355 / FGSC A1100 / Af293) (Neosartorya fumigata).